Consider the following 530-residue polypeptide: MSEKKKILQDIDRLLSEANSDPQLYHDNLGLLNDFVIETANNTAIRDKFSRDKETWQLIKTILVNSHVEDISGWSAEVIFLYKRLLRGVFILARNLAVSGSEIAQELLLQNIAYKIFNNSLKVGKLDDGMQLALYSTILSFLHNMSSKSVVFDRSSSKELFEFLHFPVKLNYEYTKDILLPYLLYFKDLIQHDDFLYYFLRYDKVDSILCGLILDKIMRDESQIFEIVSGTRIVSPDVNLSDIDMILLRTFALISTHESFIPYLEDKENNSFNIFIDLLKLMQLVVTNIDSWDKFQLTSIMTWTYKIFEKNADQIKNYFKNKLENEEIAKKLHAKCVITLDIMAKLCQFNHVQKFIISYKGLDQLISLLNIFQDNLIRVNFTKTSQASDITGVKATNKLGEKLAKDSLIEERIDLINMKIKETNFPECKLLIIEIIAMLTHENREIQNQVRELGGLGVILSNCVIDDNDPFIKERSIMCIKFLLKDNKENQNFVANLESKRVANDETLQEAGYEVDISKDGKLSLKSTNQ.

This sequence belongs to the ataxin-10 family.

It localises to the cytoplasm. In terms of biological role, may play a role in the regulation of cytokinesis. This chain is Ataxin-10 homolog (CTR86), found in Candida glabrata (strain ATCC 2001 / BCRC 20586 / JCM 3761 / NBRC 0622 / NRRL Y-65 / CBS 138) (Yeast).